The following is a 135-amino-acid chain: Small ribosomal subunit protein uS9 (135 aa).

Positions 96-135 (SADNRKPLKTEGHLSRDPRAKERRKYGLKKARKAPQFSKR) are disordered. Residues 97–115 (ADNRKPLKTEGHLSRDPRA) show a composition bias toward basic and acidic residues. The segment covering 116-135 (KERRKYGLKKARKAPQFSKR) has biased composition (basic residues).

This sequence belongs to the universal ribosomal protein uS9 family.

The chain is Small ribosomal subunit protein uS9 from Prochlorococcus marinus (strain MIT 9313).